Here is a 338-residue protein sequence, read N- to C-terminus: Glyceraldehyde-3-phosphate dehydrogenase (338 aa).

NAD(+) is bound by residues 13–14 (RI), D35, and R80. Residues 151-153 (SCT), T182, 211-212 (TG), and R234 contribute to the D-glyceraldehyde 3-phosphate site. The active-site Nucleophile is the C152. N316 contacts NAD(+).

This sequence belongs to the glyceraldehyde-3-phosphate dehydrogenase family. As to quaternary structure, homotetramer.

It localises to the cytoplasm. It catalyses the reaction D-glyceraldehyde 3-phosphate + phosphate + NAD(+) = (2R)-3-phospho-glyceroyl phosphate + NADH + H(+). It functions in the pathway carbohydrate degradation; glycolysis; pyruvate from D-glyceraldehyde 3-phosphate: step 1/5. This is Glyceraldehyde-3-phosphate dehydrogenase (GPDA) from Colletotrichum gloeosporioides (Anthracnose fungus).